The chain runs to 391 residues: UDP-galactose transporter homolog 1 (391 aa).

Helical transmembrane passes span 3-23, 52-72, 126-147, 178-198, and 207-227; these read LLQL…WGLL, LFLN…YLLV, YILI…LRYI, YKYA…AFAP, and APES…VLDG. Residue Asn230 is glycosylated (N-linked (GlcNAc...) asparagine). The next 4 helical transmembrane spans lie at 250-270, 298-318, 323-343, and 347-367; these read MMLV…TLPI, DIIA…ETLE, LTLV…SVVV, and ELSK…GIEA.

It belongs to the nucleotide-sugar transporter family. SLC35B subfamily.

The protein localises to the endoplasmic reticulum membrane. May be involved in specific transport of UDP-Gal from the cytosol to the Golgi lumen. Involved in the maintenance of optimal conditions for the folding of secretory pathway proteins in the endoplasmic reticulum. This Mycosarcoma maydis (Corn smut fungus) protein is UDP-galactose transporter homolog 1 (HUT1).